Reading from the N-terminus, the 130-residue chain is Small ribosomal subunit protein uS11 (130 aa).

It belongs to the universal ribosomal protein uS11 family. Part of the 30S ribosomal subunit. Interacts with proteins S7 and S18. Binds to IF-3.

In terms of biological role, located on the platform of the 30S subunit, it bridges several disparate RNA helices of the 16S rRNA. Forms part of the Shine-Dalgarno cleft in the 70S ribosome. The polypeptide is Small ribosomal subunit protein uS11 (Prochlorococcus marinus (strain MIT 9312)).